We begin with the raw amino-acid sequence, 477 residues long: Ribulose bisphosphate carboxylase large chain (477 aa).

The propeptide occupies 1–2 (MS). Proline 3 is modified (N-acetylproline). The residue at position 14 (lysine 14) is an N6,N6,N6-trimethyllysine. Positions 123 and 173 each coordinate substrate. Lysine 175 serves as the catalytic Proton acceptor. Lysine 177 lines the substrate pocket. Residues lysine 201, aspartate 203, and glutamate 204 each contribute to the Mg(2+) site. Lysine 201 carries the N6-carboxylysine modification. Catalysis depends on histidine 294, which acts as the Proton acceptor. Residues arginine 295, histidine 327, and serine 379 each coordinate substrate.

It belongs to the RuBisCO large chain family. Type I subfamily. As to quaternary structure, heterohexadecamer of 8 large chains and 8 small chains; disulfide-linked. The disulfide link is formed within the large subunit homodimers. Mg(2+) serves as cofactor. Post-translationally, the disulfide bond which can form in the large chain dimeric partners within the hexadecamer appears to be associated with oxidative stress and protein turnover.

The protein localises to the plastid. It localises to the chloroplast. The enzyme catalyses 2 (2R)-3-phosphoglycerate + 2 H(+) = D-ribulose 1,5-bisphosphate + CO2 + H2O. It catalyses the reaction D-ribulose 1,5-bisphosphate + O2 = 2-phosphoglycolate + (2R)-3-phosphoglycerate + 2 H(+). RuBisCO catalyzes two reactions: the carboxylation of D-ribulose 1,5-bisphosphate, the primary event in carbon dioxide fixation, as well as the oxidative fragmentation of the pentose substrate in the photorespiration process. Both reactions occur simultaneously and in competition at the same active site. The polypeptide is Ribulose bisphosphate carboxylase large chain (Solanum bulbocastanum (Wild potato)).